We begin with the raw amino-acid sequence, 227 residues long: Cytidylate kinase (227 aa).

12–20 lines the ATP pocket; that stretch reads GPSGAGKGT.

The protein belongs to the cytidylate kinase family. Type 1 subfamily.

The protein resides in the cytoplasm. It carries out the reaction CMP + ATP = CDP + ADP. The enzyme catalyses dCMP + ATP = dCDP + ADP. This chain is Cytidylate kinase, found in Citrobacter koseri (strain ATCC BAA-895 / CDC 4225-83 / SGSC4696).